Here is a 634-residue protein sequence, read N- to C-terminus: Probable LRR receptor-like serine/threonine-protein kinase At2g23950 (634 aa).

The N-terminal stretch at 1–27 (MVVMKLITMKIFSVLLLLCFFVTCSLS) is a signal peptide. Residues 28-236 (SEPRNPEVEA…SSGRRTNILA (209 aa)) lie on the Extracellular side of the membrane. 2 N-linked (GlcNAc...) asparagine glycosylation sites follow: asparagine 96 and asparagine 109. LRR repeat units lie at residues 99–121 (NLRQ…ICSL), 123–145 (KLQT…VNQL), 147–167 (NLQY…ASLS), and 171–193 (HLSF…PART). Asparagine 155 carries N-linked (GlcNAc...) asparagine glycosylation. Residues 237–257 (VALGVSLGFAVSVILSLGFIW) traverse the membrane as a helical segment. Over 258–634 (YRKKQRRLTM…SFAMELSGPR (377 aa)) the chain is Cytoplasmic. Phosphothreonine is present on threonine 296. Positions 299–554 (FSSKSILGAG…QVALLCTQFL (256 aa)) constitute a Protein kinase domain. 305-313 (LGAGGFGNV) provides a ligand contact to ATP. Threonine 322 is subject to Phosphothreonine. Lysine 327 is an ATP binding site. A phosphoserine mark is found at serine 380 and serine 383. Threonine 395 carries the phosphothreonine modification. Aspartate 422 acts as the Proton acceptor in catalysis. Phosphothreonine is present on residues threonine 455, threonine 456, and threonine 461. Tyrosine 469 is subject to Phosphotyrosine. The residue at position 471 (serine 471) is a Phosphoserine. Phosphothreonine is present on threonine 472. Serine 476 is subject to Phosphoserine. Threonine 551 bears the Phosphothreonine mark.

It belongs to the protein kinase superfamily. Ser/Thr protein kinase family.

It is found in the membrane. The catalysed reaction is L-seryl-[protein] + ATP = O-phospho-L-seryl-[protein] + ADP + H(+). The enzyme catalyses L-threonyl-[protein] + ATP = O-phospho-L-threonyl-[protein] + ADP + H(+). The chain is Probable LRR receptor-like serine/threonine-protein kinase At2g23950 from Arabidopsis thaliana (Mouse-ear cress).